Here is a 193-residue protein sequence, read N- to C-terminus: dTTP/UTP pyrophosphatase (193 aa).

The Proton acceptor role is filled by Asp75.

This sequence belongs to the Maf family. YhdE subfamily. A divalent metal cation is required as a cofactor.

The protein localises to the cytoplasm. The catalysed reaction is dTTP + H2O = dTMP + diphosphate + H(+). It carries out the reaction UTP + H2O = UMP + diphosphate + H(+). Functionally, nucleoside triphosphate pyrophosphatase that hydrolyzes dTTP and UTP. May have a dual role in cell division arrest and in preventing the incorporation of modified nucleotides into cellular nucleic acids. In Koribacter versatilis (strain Ellin345), this protein is dTTP/UTP pyrophosphatase.